We begin with the raw amino-acid sequence, 369 residues long: Anhydro-N-acetylmuramic acid kinase (369 aa).

An ATP-binding site is contributed by G12–D19.

It belongs to the anhydro-N-acetylmuramic acid kinase family.

It catalyses the reaction 1,6-anhydro-N-acetyl-beta-muramate + ATP + H2O = N-acetyl-D-muramate 6-phosphate + ADP + H(+). It participates in amino-sugar metabolism; 1,6-anhydro-N-acetylmuramate degradation. Its pathway is cell wall biogenesis; peptidoglycan recycling. Catalyzes the specific phosphorylation of 1,6-anhydro-N-acetylmuramic acid (anhMurNAc) with the simultaneous cleavage of the 1,6-anhydro ring, generating MurNAc-6-P. Is required for the utilization of anhMurNAc either imported from the medium or derived from its own cell wall murein, and thus plays a role in cell wall recycling. This chain is Anhydro-N-acetylmuramic acid kinase, found in Shewanella baltica (strain OS155 / ATCC BAA-1091).